The following is a 1300-amino-acid chain: MNKIYSLKYSHITGGLIAVSELSGRVSSRATGKKKHKRILALCFLGLLQSSYSFASQMDISNFYIRDYMDFAQNKGIFQAGATNIEIVKKDGSTLKLPEVPFPDFSPVANKGSTTSIGGAYSITATHNTKNHHSVATQNWGNSTYKQTDWNTSHPDFAVSRLDKFVVETRGATEGADISLSKQQALERYGVNYKGEKKLIAFRAGSGVVSVKKNGRITPFNEVSYKPEMLNGSFVHIDDWSGWLILTNNQFDEFNNIASQGDSGSALFVYDNQKKKWVVAGTVWGIYNYANGKNHAAYSKWNQTTIDNLKNKYSYNVDMSGAQVATIENGKLTGTGSDTTDIKNKDLIFTGGGDILLKSSFDNGAGGLVFNDKKTYRVNGDDFTFKGAGVDTRNGSTVEWNIRYDNKDNLHKIGDGTLDVRKTQNTNLKTGEGLVILGAEKTFNNIYITSGDGTVRLNAENALSGGEYNGIFFAKNGGTLDLNGYNQSFNKIAATDSGAVITNTSTKKSILSLNNTADYIYHGNINGNLDVLQHHETKKENRRLILDGGVDTTNDISLRNTQLSMQGHATEHAIYRDGAFSCSLPAPMRFLCGSDYVAGMQNTEADAVKQNGNAYKTNNAVSDLSQPDWETGTFRFGTLHLENSDFSVGRNANVIGDIQASKSNITIGDTTAYIDLHAGKNITGDGFGFRQNIVRGNSQGETLFTGGITAEDSTIVIKDKAKALFSNYVYLLNTKATIENGADVTTQSGMFSTSDISISGNLSMTGNPDKDNKFEPSIYLNDASYLLTDDSARLVAKNKASVVGDIHSTKSASIMFGHDESDLSQLSDRTSKGLALGLLGGFDVSYRGSVNAPSASATMNNTWWQLTGDSALKTLKSTNSMVYFTDSANNKKFHTLTVDELATSNSAYAMRTNLSESDKLEVKKHLSGENNILLVDFLQKPTPEKQLNIELVSAPKDTNENVFKASKQTIGFSDVTPVITTRETDDKITWSLTGYNTVANKEATRNAAALFSVDYKAFLNEVNNLNKRMGDLRDINGEAGAWARIMSGTGSASGGFSDNYTHVQVGVDKKHELDGLDLFTGFTVTHTDSSASADVFSGKTKSVGAGLYASAMFDSGAYIDLIGKYVHHDNEYTATFAGLGTRDYSTHSWYAGAEAGYRYHVTEDAWIEPQAELVYGSVSGKQFAWKDQGMHLSMKDKDYNPLIGRTGVDVGKSFSGKDWKVTARAGLGYQFDLLANGETVLRDASGEKRIKGEKDSRMLMSVGLNAEIRDNVRFGLEFEKSAFGKYNVDNAVNANFRYSF.

An N-terminal signal peptide occupies residues 1–55; the sequence is MNKIYSLKYSHITGGLIAVSELSGRVSSRATGKKKHKRILALCFLGLLQSSYSFA. Positions 57–311 constitute a Peptidase S6 domain; sequence QMDISNFYIR…NQTTIDNLKN (255 aa). Catalysis depends on charge relay system residues His127, Asp156, and Ser263. Positions 1034–1300 constitute an Autotransporter domain; that stretch reads DINGEAGAWA…AVNANFRYSF (267 aa).

Cleaved to release the mature protein from the outer membrane.

The protein resides in the periplasm. It localises to the secreted. The protein localises to the cell surface. Its subcellular location is the cell outer membrane. With respect to regulation, inhibition of cytotoxic activity by phenylmethylsulfonyl fluoride. Serine protease capable of cleaving pepsin A and human coagulation factor V, which may contribute to the mucosal hemorrhage observed in hemorrhagic colitis. The polypeptide is Serine protease EspP (espP) (Escherichia coli O157:H7).